A 369-amino-acid chain; its full sequence is Mitogen-activated protein kinase 4 (369 aa).

A Protein kinase domain is found at 32–319 (YVPIKPIGRG…VTEALEHPYM (288 aa)). ATP-binding positions include 38-46 (IGRGAYGIV) and Lys-61. Asp-158 acts as the Proton acceptor in catalysis. The residue at position 191 (Thr-191) is a Phosphothreonine. Residues 191–193 (TEY) carry the TXY motif. Position 193 is a phosphotyrosine (Tyr-193).

The protein belongs to the protein kinase superfamily. CMGC Ser/Thr protein kinase family. MAP kinase subfamily. In terms of processing, dually phosphorylated on Thr-191 and Tyr-193, which activates the enzyme. As to expression, expressed in leaves and panicles.

The catalysed reaction is L-seryl-[protein] + ATP = O-phospho-L-seryl-[protein] + ADP + H(+). The enzyme catalyses L-threonyl-[protein] + ATP = O-phospho-L-threonyl-[protein] + ADP + H(+). Activated by threonine and tyrosine phosphorylation. The chain is Mitogen-activated protein kinase 4 (MPK4) from Oryza sativa subsp. japonica (Rice).